The primary structure comprises 314 residues: Large ribosomal subunit protein uL10 (314 aa).

A disordered region spans residues 281–314; it reads GSTQETPEEKKEEAKKEEKSPDESISEGLGALFQ. Basic and acidic residues predominate over residues 287-302; sequence PEEKKEEAKKEEKSPD.

The protein belongs to the universal ribosomal protein uL10 family. Part of the 50S ribosomal subunit. Forms part of the ribosomal stalk which helps the ribosome interact with GTP-bound translation factors. Forms a heptameric L10(L12)2(L12)2(L12)2 complex, where L10 forms an elongated spine to which the L12 dimers bind in a sequential fashion.

In terms of biological role, forms part of the ribosomal stalk, playing a central role in the interaction of the ribosome with GTP-bound translation factors. This Thermoplasma acidophilum (strain ATCC 25905 / DSM 1728 / JCM 9062 / NBRC 15155 / AMRC-C165) protein is Large ribosomal subunit protein uL10.